Consider the following 325-residue polypeptide: SPbeta prophage-derived uncharacterized protein YopR (325 aa).

The protein is SPbeta prophage-derived uncharacterized protein YopR (yopR) of Bacillus subtilis (strain 168).